The primary structure comprises 291 residues: Ajmaline N-methyltransferase (291 aa).

Positions M71–G80 are SAM motif I. A Vacuolar targeting signal motif is present at residues D133–V139. The interval G134–I142 is SAM motif II. The interval V161–I170 is SAM motif III.

It belongs to the class I-like SAM-binding methyltransferase superfamily. gTMT family. As to quaternary structure, homodimer. In terms of tissue distribution, mainly expressed in roots, but barely detectable in stems and flowers.

The protein resides in the vacuole membrane. It carries out the reaction ajmaline + S-adenosyl-L-methionine = 4-methylajmaline + S-adenosyl-L-homocysteine + H(+). The enzyme catalyses norajmaline + S-adenosyl-L-methionine = 4-methylnorajmaline + S-adenosyl-L-homocysteine + H(+). It participates in alkaloid biosynthesis; ajmaline biosynthesis. In terms of biological role, N-methyltransferase involved in the biosynthesis of ajmaline-type monoterpenoid indole alkaloids (MIAs) natural products, important plant-derived pharmaceuticals used in the therapy of heart disorders. Catalyzes the indole N-methylation of ajmaline to produce 4-methylajmaline. Also able, with a lower efficiency, to mediates the conversion of norajmaline to 4-methylnorajmaline. This chain is Ajmaline N-methyltransferase, found in Rauvolfia serpentina (Serpentine wood).